A 330-amino-acid chain; its full sequence is GRB2-related adapter protein 2 (330 aa).

Residues 1-56 (MEAVAKFDFTASGEDELSFHTGDVLKILSNQEEWFKAELGSQEGYVPKNFIDIQFP) form the SH3 1 domain. Tyrosine 45 is modified (phosphotyrosine). One can recognise an SH2 domain in the interval 58-149 (WFHEGLSRHQ…QKQIFLRDRT (92 aa)). Lysine 106 carries the N6-acetyllysine modification. Residues 143–244 (IFLRDRTRED…GSLDINDGHC (102 aa)) form a disordered region. The segment covering 144 to 164 (FLRDRTREDQGHRGNSLDRRS) has biased composition (basic and acidic residues). Serine 187 carries the post-translational modification Phosphoserine. The span at 209 to 222 (PAPQQLQQPPQQRY) shows a compositional bias: low complexity. The residue at position 236 (serine 236) is a Phosphoserine. Threonine 262 is modified (phosphothreonine). One can recognise an SH3 2 domain in the interval 271–330 (GRVRWARALYDFEALEDDELGFHSGEVVEVLDSSNPSWWTGRLHNKLGLFPANYVAPMTR).

Belongs to the GRB2/sem-5/DRK family. In terms of assembly, interacts with phosphorylated LIME1 upon TCR activation. Interacts with phosphorylated LAT and LAX1 upon TCR activation. Interacts with SHB. Interacts with PTPN23.

It localises to the nucleus. It is found in the cytoplasm. The protein resides in the endosome. Its function is as follows. Interacts with SLP-76 to regulate NF-AT activation. Binds to tyrosine-phosphorylated shc. The protein is GRB2-related adapter protein 2 (GRAP2) of Homo sapiens (Human).